The chain runs to 491 residues: Probable malate:quinone oxidoreductase (491 aa).

Belongs to the MQO family. It depends on FAD as a cofactor.

The enzyme catalyses (S)-malate + a quinone = a quinol + oxaloacetate. It functions in the pathway carbohydrate metabolism; tricarboxylic acid cycle; oxaloacetate from (S)-malate (quinone route): step 1/1. The polypeptide is Probable malate:quinone oxidoreductase (Actinobacillus pleuropneumoniae serotype 5b (strain L20)).